Here is a 453-residue protein sequence, read N- to C-terminus: Iron-sulfur cluster assembly SufBD family protein slr0076 (453 aa).

This sequence belongs to the iron-sulfur cluster assembly SufBD family.

In Synechocystis sp. (strain ATCC 27184 / PCC 6803 / Kazusa), this protein is Iron-sulfur cluster assembly SufBD family protein slr0076.